The chain runs to 89 residues: Large ribosomal subunit protein uL29 (89 aa).

This sequence belongs to the universal ribosomal protein uL29 family.

This Frankia alni (strain DSM 45986 / CECT 9034 / ACN14a) protein is Large ribosomal subunit protein uL29.